A 515-amino-acid chain; its full sequence is MARMGLAGAAGRWWGLALGLTAFFLPGTHTQVVQVNDSMYGFIGTDVVLHCSFANPLPSVKITQVTWQKASNGSKQNMAIYNPTMGVSVLPPYEKRVEFLRPSFIDGTIRLSGLELEDEGMYICEFATFPTGNRESQLNLTVMAKPTNWIEGTRAVLRARKGQDDKVLVATCTSANGKPPSAVSWETRLKGEAEYQEIRNPNGTVTVISRYRLVPSREAHRQSLACIVNYHLDRFRESLTLNVQYEPEVTIEGFDGNWYLQRTDVKLTCKADANPPATEYHWTTLNGSLPKGVEAQNRTLFFRGPITYSLAGTYICEATNPIGTRSGQVEVNITEFPYTPTPEHGRRAGQMPTAIIGGVAGSVLLVLIVVGGIIVALRRRRHTFKGDYSTKKHVYGNGYSKAGIPQHHPPMAQNLQYPDDSDDEKKAGPLGGSSYEEEEEEEGGGGGERKVGGPHPKYDEDAKRPYFTVDEAEARQDGYGDRTLGYQYDPEQLDLAENMVSQNDGSFISKKEWYV.

The first 30 residues, 1 to 30 (MARMGLAGAAGRWWGLALGLTAFFLPGTHT), serve as a signal peptide directing secretion. Residues 31 to 141 (QVVQVNDSMY…GNRESQLNLT (111 aa)) form the Ig-like V-type domain. The Extracellular segment spans residues 31–354 (QVVQVNDSMY…GRRAGQMPTA (324 aa)). N-linked (GlcNAc...) asparagine glycans are attached at residues asparagine 36, asparagine 72, asparagine 139, asparagine 202, asparagine 286, asparagine 297, and asparagine 332. The cysteines at positions 51 and 124 are disulfide-linked. Ig-like C2-type domains lie at 145-243 (KPTN…TLNV) and 247-334 (PEVT…VNIT). 2 disulfides stabilise this stretch: cysteine 172–cysteine 226 and cysteine 269–cysteine 316. The tract at residues 282–299 (WTTLNGSLPKGVEAQNRT) is interaction with FGFR. Residues 355-375 (IIGGVAGSVLLVLIVVGGIIV) traverse the membrane as a helical segment. Residues 376–515 (ALRRRRHTFK…SFISKKEWYV (140 aa)) are Cytoplasmic-facing. The tract at residues 399 to 486 (YSKAGIPQHH…DGYGDRTLGY (88 aa)) is disordered. Residues serine 421, serine 433, and serine 434 each carry the phosphoserine modification. Phosphotyrosine is present on tyrosine 435. The segment covering 447-464 (GERKVGGPHPKYDEDAKR) has biased composition (basic and acidic residues). The residue at position 509 (serine 509) is a Phosphoserine.

Belongs to the nectin family. In terms of assembly, cis- and trans-homodimer. Can form trans-heterodimers with NECTIN3 and with NECTIN4. Interaction between NECTIN1 and NECTIN3 on the pre- and postsynaptic sites, respectively, initiates the formation of puncta adherentia junctions between axons and dendrites. Interacts (via cytoplasmic domain) with AFDN (via PDZ domain); this interaction recruits NECTIN1 to cadherin-based adherens junctions and provides a connection with the actin cytoskeleton. Interacts with integrin alphaV/beta3. Interacts (via Ig-like C2-type domain 2) with FGFR1, FGFR2 and FGFR3. As to quaternary structure, (Microbial infection) Interacts with herpes pseudorabies virus/PRV envelope glycoprotein D.

It localises to the cell membrane. It is found in the cell junction. The protein localises to the adherens junction. The protein resides in the presynaptic cell membrane. Its function is as follows. Cell adhesion molecule that promotes cell-cell contacts and plays important roles in the development of the nervous system. Acts by forming homophilic or heterophilic trans-dimers. Heterophilic interactions have been detected between NECTIN1 and NECTIN3 and between NECTIN1 and NECTIN4. Involved in axon guidance by promoting contacts between the commissural axons and the floor plate cells. Involved in synaptogegesis. Has some neurite outgrowth-promoting activity. Promotes formation of checkerboard-like cellular pattern of hair cells and supporting cells in the auditory epithelium via heterophilic interaction with NECTIN3: NECTIN1 is present in the membrane of hair cells and associates with NECTIN3 on supporting cells, thereby mediating heterotypic adhesion between these two cell types. Required for enamel mineralization. Functionally, (Microbial infection) Acts as a receptor for pseudorabies virus/PRV. This Mus musculus (Mouse) protein is Nectin-1.